The primary structure comprises 132 residues: Small ribosomal subunit protein uS8 (132 aa).

Belongs to the universal ribosomal protein uS8 family. In terms of assembly, part of the 30S ribosomal subunit. Contacts proteins S5 and S12.

Its function is as follows. One of the primary rRNA binding proteins, it binds directly to 16S rRNA central domain where it helps coordinate assembly of the platform of the 30S subunit. The sequence is that of Small ribosomal subunit protein uS8 from Halothermothrix orenii (strain H 168 / OCM 544 / DSM 9562).